Reading from the N-terminus, the 102-residue chain is Large ribosomal subunit protein bL28 (102 aa).

It belongs to the bacterial ribosomal protein bL28 family.

This is Large ribosomal subunit protein bL28 from Bradyrhizobium diazoefficiens (strain JCM 10833 / BCRC 13528 / IAM 13628 / NBRC 14792 / USDA 110).